The primary structure comprises 402 residues: uncharacterized protein (402 aa).

The next 12 membrane-spanning stretches (helical) occupy residues 11-31 (LALA…IDMY), 48-68 (LVQL…LIVG), 80-100 (LLIC…SPNI), 108-125 (FLQG…RAIV), 140-160 (LLMV…GAIL), 167-187 (WHTI…LIAL), 219-239 (FMGY…YVSG), 254-274 (VFSI…FIIG), 286-306 (LRIA…MTMI), 308-328 (GPLA…GMVL), 347-367 (SALL…LVGI), and 373-393 (VPMG…FFGL).

Belongs to the major facilitator superfamily. Bcr/CmlA family.

The protein resides in the cell membrane. This is an uncharacterized protein from Bacillus subtilis (strain 168).